A 400-amino-acid chain; its full sequence is 1-deoxy-D-xylulose 5-phosphate reductoisomerase (400 aa).

7 residues coordinate NADPH: threonine 10, glycine 11, serine 12, isoleucine 13, glycine 36, asparagine 38, and asparagine 124. Residue lysine 125 participates in 1-deoxy-D-xylulose 5-phosphate binding. Residue glutamate 126 coordinates NADPH. Residue aspartate 150 participates in Mn(2+) binding. 1-deoxy-D-xylulose 5-phosphate contacts are provided by serine 151, glutamate 152, serine 186, and histidine 209. Glutamate 152 contacts Mn(2+). Residue glycine 215 coordinates NADPH. Residues serine 222, asparagine 227, lysine 228, and glutamate 231 each coordinate 1-deoxy-D-xylulose 5-phosphate. Residue glutamate 231 participates in Mn(2+) binding.

Belongs to the DXR family. It depends on Mg(2+) as a cofactor. Mn(2+) serves as cofactor.

It catalyses the reaction 2-C-methyl-D-erythritol 4-phosphate + NADP(+) = 1-deoxy-D-xylulose 5-phosphate + NADPH + H(+). It participates in isoprenoid biosynthesis; isopentenyl diphosphate biosynthesis via DXP pathway; isopentenyl diphosphate from 1-deoxy-D-xylulose 5-phosphate: step 1/6. Catalyzes the NADPH-dependent rearrangement and reduction of 1-deoxy-D-xylulose-5-phosphate (DXP) to 2-C-methyl-D-erythritol 4-phosphate (MEP). This Aliivibrio fischeri (strain MJ11) (Vibrio fischeri) protein is 1-deoxy-D-xylulose 5-phosphate reductoisomerase.